The following is an 806-amino-acid chain: MSFSHREIESKWQKYWEENKTFKTEEDETREKFYALDMFPYPSGAGLHVGHPEGYTATDILSRMKRMQGYNVLHPMGWDAFGLPAEQYAIDTGNSPAEFTEKNINTFRRQIKSLGFSYDWDREVNTTDPDYYKWTQWIFIQLYNKGLAYIDEVAVNWCPALGTVLANEEVIDGKSERGGHPVERRPMKQWMLKITEYADRLLEDLEELDWPESIKDMQRNWIGRSEGAEVTFSVDGHDDTITVFTTRPDTLFGATYMVLAPEHKLVDAITTSEQKQAVESYKKEVATKSDLERTELAKEKTGVFTGAYAINPVNGEKVPIWIADYVLVSYGTGAIMAVPAHDERDYEFAKTFDLPIKEVVSGGVIEQEAYTGDGPHVNSEFLNGLSKEEAIEKMIQWLEAEKKGTKKVTYRLRDWLFSRQRYWGEPIPVIHWEDGTMSTVPEDELPLELPKMSEIKPSGTGESPLANATDWLEVVDPVTGKKGRRETNTMPQWAGSCWYYLRYIDPDNERMIADPEKLKKWLPVDIYIGGAEHAVLHLLYARFWHKVLYDLGVVPTKEPFQKLYNQGMILGENNEKMSKSKGNVVNPDDIIDSHGADTLRLYEMFMGPLDASIAWSTTGLDGARRFLDRVWRLLVDENTEEKSSKIVNGEGSPELKRAYHQTVKKVTEDFEELRFNVGISQLMVYVNEAYKQEELPLDQAEGFVKLLSPVAPHLAEELWSKLGHEGTIAYEPWPTYDEAFLVEDEVEIVVQHNGKVRAKVVVAKDATKEQMEEAALANERVKESIDGKTVRKVIVVPGKLVNIVAN.

A 'HIGH' region motif is present at residues 40–51; that stretch reads PYPSGAGLHVGH. The 'KMSKS' region signature appears at 576–580; that stretch reads KMSKS. Position 579 (Lys-579) interacts with ATP.

The protein belongs to the class-I aminoacyl-tRNA synthetase family.

It is found in the cytoplasm. The catalysed reaction is tRNA(Leu) + L-leucine + ATP = L-leucyl-tRNA(Leu) + AMP + diphosphate. This Halalkalibacterium halodurans (strain ATCC BAA-125 / DSM 18197 / FERM 7344 / JCM 9153 / C-125) (Bacillus halodurans) protein is Leucine--tRNA ligase.